The chain runs to 275 residues: Reticulon-like protein B1 (275 aa).

Basic and acidic residues-rich tracts occupy residues 1 to 10 (MAEEHKHDES) and 20 to 38 (VVERESLMDKISEKIHHGG). A disordered region spans residues 1 to 68 (MAEEHKHDES…PSSPSSSMKS (68 aa)). Ala-2 is modified (N-acetylalanine). A compositionally biased stretch (low complexity) spans 59-68 (PSSPSSSMKS). The Reticulon domain maps to 89–274 (PADIFMWKNK…PLGPLKNKKK (186 aa)). Transmembrane regions (helical) follow at residues 99 to 119 (KMSGGVLGGATAAWVVFELME), 120 to 140 (YHLLTLLCHVMIVVLAVLFLW), and 194 to 214 (FLIAIAGLWVLSILGGCFNFL).

As to quaternary structure, interacts with VirB2. As to expression, predominantly expressed in root tissues.

The protein localises to the endoplasmic reticulum membrane. Its subcellular location is the cell membrane. In terms of biological role, plays a role in the Agrobacterium-mediated plant transformation via its interaction with VirB2, the major component of the T-pilus. The protein is Reticulon-like protein B1 (RTNLB1) of Arabidopsis thaliana (Mouse-ear cress).